We begin with the raw amino-acid sequence, 446 residues long: D(1A) dopamine receptor (446 aa).

At 1–22 (MPLNDTTMDRRGLVVERDFSFR) the chain is on the extracellular side. N-linked (GlcNAc...) asparagine glycosylation is present at Asn4. A helical transmembrane segment spans residues 23-48 (ILTACFLSLLILSTLLGNTLVCAAVI). The Cytoplasmic segment spans residues 49-59 (RFRHLRSKVTN). A helical membrane pass occupies residues 60 to 86 (FFVISLAVSDLLVAVLVMPWKAVAEIA). Residues 87-95 (GFWPFGSFC) are Extracellular-facing. Residues Cys95 and Cys185 are joined by a disulfide bond. Residues 96 to 118 (NIWVAFDIMCSTASILNLCVISV) form a helical membrane-spanning segment. Residues 119-137 (DRYWAISSPFRYERKMTPK) lie on the Cytoplasmic side of the membrane. A helical transmembrane segment spans residues 138-162 (AAFILISVAWTLSVLISFIPVQLNW). Over 163–191 (HKARPLSSPDGNVSSQDETMDNCDSSLSR) the chain is Extracellular. Residues 192-217 (TYAISSSLISFYIPVAIMIVTYTRIY) form a helical membrane-spanning segment. Residues 218 to 271 (RIAQKQIRRISALERAAVHAKNCQNTTGNGANVECSQPESSFKMSFKRETKVLK) are Cytoplasmic-facing. The helical transmembrane segment at 272-298 (TLSVIMGVFVCCWLPFFILNCMVPFCE) threads the bilayer. Residues 299 to 315 (SDLPSGETKPFCIDSIT) lie on the Extracellular side of the membrane. Residues 316-340 (FDVFVWFGWANSSLNPIIYAFNADF) traverse the membrane as a helical segment. The Cytoplasmic portion of the chain corresponds to 341 to 446 (RKAFSTLLGC…PITQNGQHKT (106 aa)). Residues Cys350 and Cys354 are each lipidated (S-palmitoyl cysteine).

Belongs to the G-protein coupled receptor 1 family. As to quaternary structure, interacts with DNAJC14 via its C-terminus.

Its subcellular location is the cell membrane. The protein localises to the endoplasmic reticulum membrane. It is found in the cell projection. It localises to the cilium membrane. The protein resides in the dendrite. Its subcellular location is the dendritic spine. This is one of the five types (D1 to D5) of receptors for dopamine. The activity of this receptor is mediated by G proteins which activate adenylyl cyclase. The protein is D(1A) dopamine receptor (DRD1) of Didelphis virginiana (North American opossum).